The following is a 248-amino-acid chain: Probable transcriptional regulatory protein NGR_c27950 (248 aa).

This sequence belongs to the TACO1 family.

It is found in the cytoplasm. In Sinorhizobium fredii (strain NBRC 101917 / NGR234), this protein is Probable transcriptional regulatory protein NGR_c27950.